The primary structure comprises 177 residues: Putative rubredoxin (177 aa).

The Rubredoxin-like domain occupies 1–38; that stretch reads MKICRICGYQIPEGEFNLLEDGWVCPRCGVGKEELQDS. Fe cation-binding residues include Cys-4, Cys-7, Cys-25, and Cys-28.

It belongs to the rubredoxin family. Fe(3+) is required as a cofactor.

This Methanothermobacter thermautotrophicus (strain ATCC 29096 / DSM 1053 / JCM 10044 / NBRC 100330 / Delta H) (Methanobacterium thermoautotrophicum) protein is Putative rubredoxin (rdxA).